A 955-amino-acid polypeptide reads, in one-letter code: Villin-5 (955 aa).

Gelsolin-like repeat units follow at residues 29–111, 152–218, 274–339, and 644–712; these read FKPV…DKFL, VHVK…VEDG, LLHE…TVMF, and HFTQ…GSEP. Disordered regions lie at residues 741–783 and 801–895; these read KGGG…RVRV and NSRN…GLPV. Polar residues predominate over residues 756-776; the sequence is PTYSGRSTVQDKSQRSRSMSF. Positions 817-836 are enriched in low complexity; that stretch reads PKSATPDSSSAPSKSSATAS. Basic and acidic residues predominate over residues 842 to 864; that stretch reads DRPKSVKDGSELEKPKQEEDAKE. Over residues 867–878 the composition is skewed to polar residues; the sequence is NTMTSRVESLTI. Positions 890-955 constitute an HP domain; sequence DEGLPVYPYD…NRMKIALQLF (66 aa).

This sequence belongs to the villin/gelsolin family.

Its subcellular location is the cytoplasm. It localises to the cytoskeleton. In terms of biological role, ca(2+)-regulated actin-binding protein. Binds actin microfilaments (MFs). Involved in actin filament bundling, severing and capping. Caps the barbed end of actin filaments and is able to sever them in a calcium-dependent manner. In Oryza sativa subsp. japonica (Rice), this protein is Villin-5.